The following is a 281-amino-acid chain: ATP phosphoribosyltransferase (281 aa).

The protein belongs to the ATP phosphoribosyltransferase family. Long subfamily. Mg(2+) serves as cofactor.

It localises to the cytoplasm. The catalysed reaction is 1-(5-phospho-beta-D-ribosyl)-ATP + diphosphate = 5-phospho-alpha-D-ribose 1-diphosphate + ATP. Its pathway is amino-acid biosynthesis; L-histidine biosynthesis; L-histidine from 5-phospho-alpha-D-ribose 1-diphosphate: step 1/9. Feedback inhibited by histidine. Functionally, catalyzes the condensation of ATP and 5-phosphoribose 1-diphosphate to form N'-(5'-phosphoribosyl)-ATP (PR-ATP). Has a crucial role in the pathway because the rate of histidine biosynthesis seems to be controlled primarily by regulation of HisG enzymatic activity. In Corynebacterium efficiens (strain DSM 44549 / YS-314 / AJ 12310 / JCM 11189 / NBRC 100395), this protein is ATP phosphoribosyltransferase.